The primary structure comprises 347 residues: MTNKTSLSYKDAGVDIDAGNDLVDRIKGVVKQTRRPEVMGGLGGFGALCALPQKYREPILVSGTDGVGTKLRLAMDLKRHDTIGIDLVAMCVNDLVVQGAEPLFFLDYFATGKLDVDTAASVITGIAEGCKQSGCALVGGETAEMPGMYHGDDYDVAGFCVGVVEKSEIIDGSKVTPGDVLVALGASGPHSNGYSLVRKILDVSNTNPEQTSLEGKSLADHLLEPTKIYVKSILSLIEQLDIHAIAHLTGGGFWENIPRVLPQGMQAVIDEASWQWPAVFSWLQHAGNVSRHEMYRTFNCGVGMVVALPAELADKAVELLTASGEKAWKIGVIATATEGAEQVIINP.

Belongs to the AIR synthase family.

It localises to the cytoplasm. The catalysed reaction is 2-formamido-N(1)-(5-O-phospho-beta-D-ribosyl)acetamidine + ATP = 5-amino-1-(5-phospho-beta-D-ribosyl)imidazole + ADP + phosphate + H(+). It participates in purine metabolism; IMP biosynthesis via de novo pathway; 5-amino-1-(5-phospho-D-ribosyl)imidazole from N(2)-formyl-N(1)-(5-phospho-D-ribosyl)glycinamide: step 2/2. The chain is Phosphoribosylformylglycinamidine cyclo-ligase from Yersinia pseudotuberculosis serotype O:1b (strain IP 31758).